An 84-amino-acid polypeptide reads, in one-letter code: Beta-cardiotoxin CTX9 (84 aa).

A signal peptide spans 1–21 (MKTLLLTLVVVTIVCLDLGYT). 4 cysteine pairs are disulfide-bonded: C24/C43, C36/C61, C65/C76, and C77/C82.

It belongs to the three-finger toxin family. Short-chain subfamily. Aminergic toxin sub-subfamily. As to expression, expressed by the venom gland.

It localises to the secreted. Acts as a beta-blocker by binding to beta-1 and beta-2 adrenergic receptors (ADRB1 and ADRB2). It dose-dependently decreases the heart rate (bradycardia), whereas conventional cardiotoxins increases it. At 100 mg/kg, intraperitoneal injection into mice provokes labored breathing, impaired locomotion, lack of response to external stimuli, and death (after 30 minutes). This Ophiophagus hannah (King cobra) protein is Beta-cardiotoxin CTX9.